The chain runs to 238 residues: tRNA1(Val) (adenine(37)-N6)-methyltransferase (238 aa).

This sequence belongs to the methyltransferase superfamily. tRNA (adenine-N(6)-)-methyltransferase family.

The protein resides in the cytoplasm. The enzyme catalyses adenosine(37) in tRNA1(Val) + S-adenosyl-L-methionine = N(6)-methyladenosine(37) in tRNA1(Val) + S-adenosyl-L-homocysteine + H(+). Its function is as follows. Specifically methylates the adenine in position 37 of tRNA(1)(Val) (anticodon cmo5UAC). The sequence is that of tRNA1(Val) (adenine(37)-N6)-methyltransferase from Shewanella baltica (strain OS185).